Here is a 468-residue protein sequence, read N- to C-terminus: MQWNGVRRAHSIWCKRLTNNTHLHHPSIPVSHFFTMSSLEEPLSFDKLPSMSTMDRIQRFSSGACRPRDDVGMGHRWIEGRDCTTSNSCIDDDKSFAKESFPWRRHTRKLSEGEHMFRNISFAGRTSTVSGTLRESKSFKEQKYSTFSNENGTSHISNKISKGIPKFVKIVEVGPRDGLQNEKNIVPTSVKVELIQRLVSSGLPVVEATSFVSPKWVPQLADAKDVMDAVNTLDGARLPVLTPNLKGFQAAVSAGAKEVAIFASASESFSLSNINCTIEESLLRYRVVATAAKEHSVPVRGYVSCVVGCPVEGPVLPSKVAYVVKELYDMGCFEISLGDTIGIGTPGSVVPMLEAVMAVVPADKLAVHFHDTYGQALANILVSLQMGISIVDSSIAGLGGCPYAKGASGNVATEDVVYMLNGLGVHTNVDLGKLIAAGDFISKHLGRPNGSKAAVALNRRITADASKI.

The Pyruvate carboxyltransferase domain maps to 168 to 435; the sequence is VKIVEVGPRD…HTNVDLGKLI (268 aa). R176 contributes to the substrate binding site. Positions 177, 368, and 370 each coordinate a divalent metal cation. C401 is an active-site residue. N410 is a binding site for a divalent metal cation.

This sequence belongs to the HMG-CoA lyase family. Homodimer. It depends on a divalent metal cation as a cofactor.

The protein resides in the mitochondrion matrix. It catalyses the reaction (3S)-3-hydroxy-3-methylglutaryl-CoA = acetoacetate + acetyl-CoA. Its pathway is metabolic intermediate metabolism; (S)-3-hydroxy-3-methylglutaryl-CoA degradation; acetoacetate from (S)-3-hydroxy-3-methylglutaryl-CoA: step 1/1. Functionally, involved in the catabolism of branched amino acids such as leucine. The sequence is that of Hydroxymethylglutaryl-CoA lyase, mitochondrial (HMGCL) from Arabidopsis thaliana (Mouse-ear cress).